Consider the following 344-residue polypeptide: S-adenosylmethionine:tRNA ribosyltransferase-isomerase (344 aa).

The protein belongs to the QueA family. As to quaternary structure, monomer.

Its subcellular location is the cytoplasm. The enzyme catalyses 7-aminomethyl-7-carbaguanosine(34) in tRNA + S-adenosyl-L-methionine = epoxyqueuosine(34) in tRNA + adenine + L-methionine + 2 H(+). It participates in tRNA modification; tRNA-queuosine biosynthesis. Functionally, transfers and isomerizes the ribose moiety from AdoMet to the 7-aminomethyl group of 7-deazaguanine (preQ1-tRNA) to give epoxyqueuosine (oQ-tRNA). This Acinetobacter baylyi (strain ATCC 33305 / BD413 / ADP1) protein is S-adenosylmethionine:tRNA ribosyltransferase-isomerase.